The sequence spans 545 residues: MHQVGSTNMMKIQSIAQLSITMDAGTKILVVGDVRGRFKQLFQRVEQVNKKAGPFEILCCVGDFFGEDKQNEELIAYKNGFKHITVPTYILGPNQREHEKYFENLTDGEICTNLTYLGRRGVYTLSSGVKIAYLSGLEAQGTADSAGSEHEFTKADVIAVRNSCLVSKNCSTEYRGVDVLLTSQWPFGMQEKENATASKLVSFLCREIKPRYHFCAINGTHYESAPFRMPKDETTQFELCTRFISLAEVGNAEKAKYIYALSLKPVDKSRLLDLAQKTTNEIPCPFIGLDLGGAIGKNDSSENRQYFYDMDGGRRKRQGGDNNKRDKRPRIPQIEQDKCWFCLSSPDVEKHLIITVGEHFYLALAKGPINKHHVMILSTKHVPCAAQLSPDDWKELNKFKAALRKFFKTLGQVVCFTERHYKSVHLQINALAFEEGYAWKIKHSFEDKAEEFNLEFETLPALDSEKMLPEMGPYFLAELPDDSTLITRQMKHFPIHFARDVFCSENLLNCDEKVNWKDCLLDKDEEVAYVEDFRKAFAPFDFTDD.

The segment at 306–329 (YFYDMDGGRRKRQGGDNNKRDKRP) is disordered.

Belongs to the CWF19 family.

The polypeptide is CWF19-like protein 1 homolog (Drosophila melanogaster (Fruit fly)).